The primary structure comprises 215 residues: Ectodysplasin-A receptor-associated adapter protein (215 aa).

Disordered stretches follow at residues 1–41 (MGLR…FNMS) and 62–86 (LNCP…TGDP). The span at 17-28 (GHQEDHMVKEPV) shows a compositional bias: basic and acidic residues. The region spanning 123 to 202 (DVIRIKLDPC…KVLRRWVDEE (80 aa)) is the Death domain.

As to quaternary structure, self-associates and binds EDAR, TRAF1, TRAF2 and TRAF3. In terms of tissue distribution, detected in adult pancreas, placenta and fetal skin, and at lower levels in lung, thymus, prostate and testis.

Its subcellular location is the cytoplasm. Its function is as follows. Adapter protein that interacts with EDAR DEATH domain and couples the receptor to EDA signaling pathway during morphogenesis of ectodermal organs. Mediates the activation of NF-kappa-B. The polypeptide is Ectodysplasin-A receptor-associated adapter protein (EDARADD) (Homo sapiens (Human)).